We begin with the raw amino-acid sequence, 340 residues long: Deubiquitinase SseL (340 aa).

Residue His-223 is part of the active site. Residue Cys-285 is the Nucleophile of the active site.

Belongs to the peptidase C79 family.

The protein localises to the secreted. Its subcellular location is the host cytoplasm. Functionally, effector proteins function to alter host cell physiology and promote bacterial survival in host tissues. This protease targets the host cell ubiquitin pathway by acting as a deubiquitinase in infected host cells. The sequence is that of Deubiquitinase SseL (sseL) from Salmonella paratyphi A (strain ATCC 9150 / SARB42).